We begin with the raw amino-acid sequence, 1331 residues long: Probable serine/threonine-protein kinase DDB_G0272254 (1331 aa).

Composition is skewed to low complexity over residues 1-42 (METS…NSSS), 96-116 (NDNNNSSSSSSSSSSGNNNNN), and 153-175 (TQQTPTTTATTNTSTSTTNSTPS). Disordered stretches follow at residues 1–43 (METS…SSSA), 92–132 (DKIC…QQIS), and 150–175 (ILNTQQTPTTTATTNTSTSTTNSTPS). The next 2 membrane-spanning stretches (helical) occupy residues 201–221 (FGFSPIYFVESIFIVLLIYIL) and 224–244 (FVLKETSVYVISIFVIYFVIY). Over residues 259–287 (SINDSDSSSNNNNNNNNTTTTNNDSASTK) the composition is skewed to low complexity. Disordered stretches follow at residues 259–300 (SIND…PETY), 320–419 (NLNN…LSKE), 435–464 (SVGKTHNRSSSGSDSIQPPPLPTGGSSHNI), and 512–581 (AHSN…VVGN). A compositionally biased stretch (polar residues) spans 288 to 299 (GNNNNEISSPET). The segment covering 436–450 (VGKTHNRSSSGSDSI) has biased composition (polar residues). A compositionally biased stretch (low complexity) spans 514 to 531 (SNNNNNNNNSNTNNNNNN). The span at 532-555 (QSVSAPVSQLATPVYQTPGTNSVV) shows a compositional bias: polar residues. The span at 557 to 577 (NLENDNENNNDSFSDINDNNS) shows a compositional bias: low complexity. Kelch repeat units lie at residues 665–710 (SLVL…NHDY), 716–769 (KFYL…RYGN), 770–816 (RFLL…GHTS), 822–868 (KLII…ELND), 909–959 (NIVM…LIKN), and 962–1008 (KLFI…NNNN). The span at 834–860 (NNNNNNNNNNNNNNNNNNNNNNNNNNN) shows a compositional bias: low complexity. A disordered region spans residues 834–862 (NNNNNNNNNNNNNNNNNNNNNNNNNNNKG). A disordered region spans residues 976–1042 (NNNSSSGGNN…NNNNNNNNNN (67 aa)). Positions 1073–1331 (IKIDKEIGKG…EITNYLTKTF (259 aa)) constitute a Protein kinase domain. Residues 1079–1087 (IGKGHFSKV) and Lys-1100 each bind ATP. The active-site Proton acceptor is Asp-1200.

Belongs to the protein kinase superfamily. TKL Ser/Thr protein kinase family.

It localises to the membrane. It carries out the reaction L-seryl-[protein] + ATP = O-phospho-L-seryl-[protein] + ADP + H(+). It catalyses the reaction L-threonyl-[protein] + ATP = O-phospho-L-threonyl-[protein] + ADP + H(+). The chain is Probable serine/threonine-protein kinase DDB_G0272254 from Dictyostelium discoideum (Social amoeba).